We begin with the raw amino-acid sequence, 242 residues long: Small ribosomal subunit protein uS3 (242 aa).

The region spanning 39–110 (IRKFIHKKYG…QVRINVVEVE (72 aa)) is the KH type-2 domain. Residues 216-242 (QPMPVGAAPRRRASRRPQQFEDRSNEG) form a disordered region. Over residues 233–242 (QQFEDRSNEG) the composition is skewed to basic and acidic residues.

This sequence belongs to the universal ribosomal protein uS3 family. Part of the 30S ribosomal subunit. Forms a tight complex with proteins S10 and S14.

Functionally, binds the lower part of the 30S subunit head. Binds mRNA in the 70S ribosome, positioning it for translation. The protein is Small ribosomal subunit protein uS3 of Synechococcus sp. (strain CC9605).